The primary structure comprises 195 residues: Shikimate kinase (195 aa).

33 to 38 (GAGKTT) lines the ATP pocket. Residue Thr37 coordinates Mg(2+). The substrate site is built by Asp55, Arg79, and Gly101. Arg139 is an ATP binding site. Substrate is bound at residue Arg158. Residue Arg175 coordinates ATP.

This sequence belongs to the shikimate kinase family. As to quaternary structure, monomer. Mg(2+) is required as a cofactor.

It localises to the cytoplasm. The catalysed reaction is shikimate + ATP = 3-phosphoshikimate + ADP + H(+). It functions in the pathway metabolic intermediate biosynthesis; chorismate biosynthesis; chorismate from D-erythrose 4-phosphate and phosphoenolpyruvate: step 5/7. Functionally, catalyzes the specific phosphorylation of the 3-hydroxyl group of shikimic acid using ATP as a cosubstrate. This is Shikimate kinase from Nitrosospira multiformis (strain ATCC 25196 / NCIMB 11849 / C 71).